A 123-amino-acid polypeptide reads, in one-letter code: Large ribosomal subunit protein bL12 (123 aa).

This sequence belongs to the bacterial ribosomal protein bL12 family. As to quaternary structure, homodimer. Part of the ribosomal stalk of the 50S ribosomal subunit. Forms a multimeric L10(L12)X complex, where L10 forms an elongated spine to which 2 to 4 L12 dimers bind in a sequential fashion. Binds GTP-bound translation factors.

Its function is as follows. Forms part of the ribosomal stalk which helps the ribosome interact with GTP-bound translation factors. Is thus essential for accurate translation. The chain is Large ribosomal subunit protein bL12 from Maricaulis maris (strain MCS10) (Caulobacter maris).